The following is a 147-amino-acid chain: Sec-independent protein translocase protein TatB (147 aa).

A helical membrane pass occupies residues 2–22 (FDGIGFMELLLIGVLGLVVLG). Positions 85-97 (QLKQAAQSVNRPY) are enriched in polar residues. Residues 85 to 147 (QLKQAAQSVN…DTRSNPKANG (63 aa)) are disordered. The span at 113–133 (ASQSVSTEASPSASSAPTSES) shows a compositional bias: low complexity.

Belongs to the TatB family. As to quaternary structure, the Tat system comprises two distinct complexes: a TatABC complex, containing multiple copies of TatA, TatB and TatC subunits, and a separate TatA complex, containing only TatA subunits. Substrates initially bind to the TatABC complex, which probably triggers association of the separate TatA complex to form the active translocon.

Its subcellular location is the cell inner membrane. Its function is as follows. Part of the twin-arginine translocation (Tat) system that transports large folded proteins containing a characteristic twin-arginine motif in their signal peptide across membranes. Together with TatC, TatB is part of a receptor directly interacting with Tat signal peptides. TatB may form an oligomeric binding site that transiently accommodates folded Tat precursor proteins before their translocation. This chain is Sec-independent protein translocase protein TatB, found in Shewanella sp. (strain ANA-3).